The chain runs to 236 residues: Small ribosomal subunit protein uS2c (236 aa).

The protein belongs to the universal ribosomal protein uS2 family.

The protein resides in the plastid. It localises to the chloroplast. This is Small ribosomal subunit protein uS2c (rps2) from Phalaenopsis aphrodite subsp. formosana (Moth orchid).